The primary structure comprises 115 residues: NADH-ubiquinone oxidoreductase chain 3 (115 aa).

Transmembrane regions (helical) follow at residues 3–23 (LYTV…VAFW), 55–75 (FFLV…LLPL), and 86–106 (TMMI…AYEW).

Belongs to the complex I subunit 3 family. Core subunit of respiratory chain NADH dehydrogenase (Complex I) which is composed of 45 different subunits. Interacts with TMEM186. Interacts with TMEM242.

It localises to the mitochondrion inner membrane. The enzyme catalyses a ubiquinone + NADH + 5 H(+)(in) = a ubiquinol + NAD(+) + 4 H(+)(out). Its function is as follows. Core subunit of the mitochondrial membrane respiratory chain NADH dehydrogenase (Complex I) which catalyzes electron transfer from NADH through the respiratory chain, using ubiquinone as an electron acceptor. Essential for the catalytic activity of complex I. This chain is NADH-ubiquinone oxidoreductase chain 3, found in Mus musculus (Mouse).